The following is a 410-amino-acid chain: MTTDLNQNPYLVRAQQLLCRVPLIDGHNDFPFIIRGLYQNNLTRASLNDLPIGQTDISRLRQGSVGGQFWSAYVPNPVHSDKESDEAYLECLRQTLQQIDVIHRMVSEHPDVFGLAQSAADVWKIFRAGRIASLIGIEGLHQIAHSPSALRMMHKLGVRYATLCHTKNNRYCDSAVDRHTSSPWSEYGGQTHDPGDEPSRNVRTGFHSLTLKYLTAVHGRIVDLSHTSEATQRDAIAISKAPVIFSHSASSSLTPSPRNVTDEILHQLKRNGGLIMVCFLRDLVNSADDANTTGSRVVDHILYIAETIGYDHVGIGSDFDGMLEGPLGLDDVSRFPELVADLFRRGVSEERIEKIVGLNTLRVMKQVEDVAVREQAEGSTGVLCDVVKPIWTAEQRQMLAEQGRTRGLRP.

The Zn(2+) site is built by His-27, Asp-29, and Glu-138. Residue His-165 coordinates substrate. Residues 180 to 200 are disordered; the sequence is TSSPWSEYGGQTHDPGDEPSR. Substrate is bound by residues Arg-258 and Asp-318.

The protein belongs to the metallo-dependent hydrolases superfamily. Peptidase M19 family. Requires Zn(2+) as cofactor.

The catalysed reaction is an L-aminoacyl-L-amino acid + H2O = 2 an L-alpha-amino acid. It functions in the pathway mycotoxin biosynthesis. Functionally, dipeptidase; part of the gene cluster that mediates the biosynthesis of acetylaranotin, a member of the epipolythiodioxopiperazine (ETP) class of toxins characterized by a disulfide-bridged cyclic dipeptide. The first step of acetylaranotin biosynthesis is performed by the NRPS ataP which produces diketopiperazine cyclo-L-Phe-L-Phe via the condensation of 2 phenylalanines (L-Phe). The ataC domain of ataTC then catalyzes the formation of bishydroxylation of cyclo-L-Phe-L-Phe. The glutathione S-transferase domain ataG in ataIMG further catalyzes the conjugation of two glutathiones to the bishydroxylated intermediate. Next, the dipeptidase ataJ removes the Glu residues. The following step is performed by the carbon sulfur lyase domain ataI of ataIMG which may convert the bis-cysteinyl adduct to yield an epidithiol intermediate. The ataT domain from ataTC then catalyzes the oxidation of the free dithiols, followed by a cyclization step catalyzed by the cytochrome P450 ataF. AtaF probably acts as an epoxidase to promote a dual epoxidation formation at C8 and C9 along with C8' and C9', followed by the spontaneous nucleophilic attack of the amide nitrogens N10 and N10' to yield an intermediate with the pyrrolidine partial structure. The final steps of acetylaranotin biosynthesis involve the acetylation and ring rearrangement of an epitetrathiodiketopiperazine intermediate to produce acetylaranotin. AtaH probably catalyzes the acetylation of epitetrathiodiketopiperazine to produce a diacetate and ataY is responsible for the formation of the dihydrooxepin moiety that converts the diacetate intermediate to acetylaranotin via acetylapoaranotin. Both enzymes could function independently in the absence of the other. The acetylaranotin bis-thiomethyltransferase ataS located outside of acetylaranotin gene cluster is the main thiomethyltransferase responsible for converting acetylaranotin and its related intermediates to their methylated forms. The sequence is that of Dipeptidase ataJ from Aspergillus terreus (strain NIH 2624 / FGSC A1156).